The following is a 1876-amino-acid chain: 1,3-beta-glucan synthase component FKS1 (1876 aa).

Polar residues-rich tracts occupy residues 1–25 (MNTD…QSQE) and 60–71 (QPPNESYDQDYT). The tract at residues 1–108 (MNTDQQPYQG…PGTPGYDSYG (108 aa)) is disordered. Topologically, residues 1 to 454 (MNTDQQPYQG…WLHLVTNFNR (454 aa)) are cytoplasmic. Lys259 participates in a covalent cross-link: Glycyl lysine isopeptide (Lys-Gly) (interchain with G-Cter in ubiquitin). 2 positions are modified to phosphothreonine: Thr269 and Thr272. Residues Lys275 and Lys386 each participate in a glycyl lysine isopeptide (Lys-Gly) (interchain with G-Cter in ubiquitin) cross-link. The chain crosses the membrane as a helical span at residues 455 to 475 (IWVMHISIFWMYFAYNSPTFY). Residues 476–492 (THNYQQLVDNQPLAAYK) lie on the Extracellular side of the membrane. Residues 493 to 513 (WASCALGGTVASLIQIVATLC) traverse the membrane as a helical segment. Topologically, residues 514–531 (EWSFVPRKWAGAQHLSRR) are cytoplasmic. A helical membrane pass occupies residues 532–552 (FWFLCIIFGINLGPIIFVFAY). Residues 553–563 (DKDTVYSTAAH) are Extracellular-facing. A helical transmembrane segment spans residues 564-584 (VVAAVMFFVAVATIIFFSIMP). The Cytoplasmic segment spans residues 585–621 (LGGLFTSYMKKSTRRYVASQTFTAAFAPLHGLDRWMS). A helical transmembrane segment spans residues 622–642 (YLVWVTVFAAKYSESYYFLVL). The Extracellular portion of the chain corresponds to 643–678 (SLRDPIRILSTTAMRCTGEYWWGAVLCKVQPKIVLG). A helical transmembrane segment spans residues 679–699 (LVIATDFILFFLDTYLWYIIV). At 700 to 1358 (NTIFSVGKSF…QPAVDWVRRY (659 aa)) the chain is on the cytoplasmic side. Glycyl lysine isopeptide (Lys-Gly) (interchain with G-Cter in ubiquitin) cross-links involve residues Lys910 and Lys915. Residues 1359–1379 (TLSIFIVFWIAFVPIVVQELI) traverse the membrane as a helical segment. Residues 1380–1444 (ERGLWKATQR…RIPFSILYSR (65 aa)) are Extracellular-facing. A helical membrane pass occupies residues 1445–1465 (FAGSAIYMGARSMLMLLFGTV). Over 1466-1469 (AHWQ) the chain is Cytoplasmic. The helical transmembrane segment at 1470-1490 (APLLWFWASLSSLIFAPFVFN) threads the bilayer. The Extracellular segment spans residues 1491-1560 (PHQFAWEDFF…DASRAHRTNL (70 aa)). Glycyl lysine isopeptide (Lys-Gly) (interchain with G-Cter in ubiquitin) cross-links involve residues Lys1539 and Lys1547. Residues 1561 to 1581 (IMAEIIPCAIYAAGCFIAFTF) form a helical membrane-spanning segment. Over 1582-1601 (INAQTGVKTTDDDRVNSVLR) the chain is Cytoplasmic. A helical membrane pass occupies residues 1602–1622 (IIICTLAPIAVNLGVLFFCMG). Residues 1623–1643 (MSCCSGPLFGMCCKKTGSVMA) lie on the Extracellular side of the membrane. The helical transmembrane segment at 1644-1664 (GIAHGVAVIVHIAFFIVMWVL) threads the bilayer. The Cytoplasmic segment spans residues 1665-1672 (ESFNFVRM). A helical membrane pass occupies residues 1673 to 1695 (LIGVVTCIQCQRLIFHCMTALML). Over 1696 to 1802 (TREFKNDHAN…RKRMVKKYCS (107 aa)) the chain is Extracellular. A helical transmembrane segment spans residues 1803-1823 (LYFLVLAIFAGCIIGPAVASA). Residues 1824 to 1876 (KIHKHIGDSLDGVVHNLFQPINTTNNDTGSQMSTYQSHYYTHTPSLKTWSTIK) lie on the Cytoplasmic side of the membrane.

It belongs to the glycosyltransferase 48 family. As to quaternary structure, component of the 1,3-beta-glucan synthase (GS) complex, composed of two alternate catalytic subunits FKS1 or GSC2, and a regulatory subunit RHO1. Interacts with RHO1, which is a GTP-binding protein.

It localises to the mitochondrion. Its subcellular location is the cell membrane. The enzyme catalyses [(1-&gt;3)-beta-D-glucosyl](n) + UDP-alpha-D-glucose = [(1-&gt;3)-beta-D-glucosyl](n+1) + UDP + H(+). In terms of biological role, alternate catalytic subunit of the 1,3-beta-glucan synthase (GS) complex. Synthesizes 1,3-beta-glucan, a major structural component of the yeast cell wall. Involved in cell wall synthesis, maintenance and remodeling. This chain is 1,3-beta-glucan synthase component FKS1 (FKS1), found in Saccharomyces cerevisiae (strain ATCC 204508 / S288c) (Baker's yeast).